The primary structure comprises 503 residues: Glutamate--tRNA ligase (503 aa).

The 'HIGH' region signature appears at 14-24; the sequence is PSPTGSLHIGG. The short motif at 261–265 is the 'KMSKS' region element; that stretch reads KLSKR. Lysine 264 serves as a coordination point for ATP.

Belongs to the class-I aminoacyl-tRNA synthetase family. Glutamate--tRNA ligase type 1 subfamily. In terms of assembly, monomer.

The protein localises to the cytoplasm. The catalysed reaction is tRNA(Glu) + L-glutamate + ATP = L-glutamyl-tRNA(Glu) + AMP + diphosphate. In terms of biological role, catalyzes the attachment of glutamate to tRNA(Glu) in a two-step reaction: glutamate is first activated by ATP to form Glu-AMP and then transferred to the acceptor end of tRNA(Glu). This Chloroflexus aurantiacus (strain ATCC 29366 / DSM 635 / J-10-fl) protein is Glutamate--tRNA ligase.